Reading from the N-terminus, the 285-residue chain is Aquaporin-6 (285 aa).

Transmembrane regions (helical) follow at residues 36–56 (IFWK…VFSC), 76–96 (YCFK…ALLL), and 105–125 (ISLV…CYYG). The short motif at 86 to 88 (NPV) is the NPA 1 element. A glycan (N-linked (GlcNAc...) asparagine) is linked at Asn128. 2 helical membrane passes run 143-163 (VSPA…ILTM) and 177-197 (GDSN…SGMA). An NPA 2 motif is present at residues 206–208 (NPM). Residues 225–245 (YIYWIGPIFGCLLAVFTFDYT) traverse the membrane as a helical segment.

This sequence belongs to the MIP/aquaporin (TC 1.A.8) family.

It localises to the cell membrane. Its function is as follows. Probable water-specific aquaporin that may modulate the water content and osmolytes during anhydrobiosis. In Milnesium tardigradum (Water bear), this protein is Aquaporin-6.